The following is a 274-amino-acid chain: Undecaprenyl-diphosphatase (274 aa).

Transmembrane regions (helical) follow at residues 40–60, 90–110, 114–134, 147–167, 190–210, 221–241, and 252–272; these read PGAAFTAVIQIGTEVAVLMFF, WFIIVGSVPIVLLGIALKDVI, FRSLWLIGTTLIVLGLVLGVA, ISLRDAILMGLAQALALIPGV, YAFLLAIPAVIGAGVFELKDI, PTIVATIVSFVVGYAAIAWLL, and FVLYRVALGAATLVLVATGVI.

This sequence belongs to the UppP family.

It is found in the cell membrane. The enzyme catalyses di-trans,octa-cis-undecaprenyl diphosphate + H2O = di-trans,octa-cis-undecaprenyl phosphate + phosphate + H(+). Functionally, catalyzes the dephosphorylation of undecaprenyl diphosphate (UPP). Confers resistance to bacitracin. The chain is Undecaprenyl-diphosphatase from Nocardioides sp. (strain ATCC BAA-499 / JS614).